The chain runs to 175 residues: Regenerating islet-derived protein 3-beta (175 aa).

The signal sequence occupies residues 1–26 (MLPPTACSVMSWMLLSCLMLLSQVQG). Residues 27 to 37 (EDSLKNIPSAR) constitute a propeptide that is removed on maturation. 3 disulfides stabilise this stretch: cysteine 40/cysteine 51, cysteine 68/cysteine 171, and cysteine 146/cysteine 163. The C-type lectin domain maps to 47 to 172 (YGSYCYALFQ…CEVKLPYVCK (126 aa)). Histidine 107 contributes to the Zn(2+) binding site. An EPN motif is present at residues 114 to 116 (EPN). Glutamate 121 is a Zn(2+) binding site.

Forms a hexameric membrane-permeabilizing oligomeric pore on membrane phospholipids. The hexamer is formed by three dimers related by helical symmetry. Forms filaments, filamentation traps pore complexes and limits damage to host cells. Interacts with EXTL3. In terms of processing, proteolytic processing by trypsin removes an inhibitory N-terminal propeptide and is essential for peptidoglycan binding and antibacterial activity. In terms of tissue distribution, constitutively expressed in the small intestine, moderately in colon and at an extremely low level in healthy pancreas.

Its subcellular location is the secreted. Lipopolysaccharide inhibits pore-forming activity, explaining why is bactericidal for Gram-positive but not Gram-negative bacteria. Its function is as follows. Bactericidal C-type lectin which acts against several intestinal Gram-positive and Gram-negative bacteria. Lacks antibacterial activity against S.typhimurium. May play a role in protection against infection with S.enteritidis by inhibiting its translocation from the gut lumen into intestinal tissues and further extraintestinal tissues. Acts as a hormone in response to different stimuli. Secreted by different cell types to activate its receptor EXTL3 and induce cell specific signaling pathways. In pancreas, is able stimulate cell proliferation. The sequence is that of Regenerating islet-derived protein 3-beta from Mus musculus (Mouse).